Consider the following 177-residue polypeptide: Ferritin light chain, oocyte isoform (177 aa).

A Ferritin-like diiron domain is found at 9-158 (QNYHEESEAG…DHLTNLRRVK (150 aa)). Residues E26, H64, and E106 each coordinate Fe cation.

It belongs to the ferritin family. In terms of assembly, oligomer of 24 subunits. There are two types of subunits: L (light) chain and H (heavy) chain. The functional molecule is roughly spherical and contains a central cavity into which the insoluble mineral iron core is deposited.

Its function is as follows. Stores iron in a soluble, non-toxic, readily available form. Important for iron homeostasis. Iron is taken up in the ferrous form and deposited as ferric hydroxides after oxidation. This is Ferritin light chain, oocyte isoform from Xenopus laevis (African clawed frog).